Consider the following 180-residue polypeptide: Insulin-like growth factor 2 (180 aa).

Residues M1–A24 form the signal peptide. The b stretch occupies residues A25 to F52. Disulfide bonds link C33–C71, C45–C84, and C70–C75. The tract at residues S53–R64 is c. An a region spans residues G65–A85. The interval T86 to E91 is d. A propeptide spans R92–Q180 (e peptide). The interval V160 to Q180 is disordered.

This sequence belongs to the insulin family. Interacts with MYORG; this interaction is required for IGF2 secretion. Interacts with integrins ITGAV:ITGB3 and ITGA6:ITGB4; integrin-binding is required for IGF2 signaling. Interacts with IGFBP2. Post-translationally, proteolytically processed by PCSK4, proIGF2 is cleaved at Arg-128 and Arg-92 to generate big-IGF2 and mature IGF2.

The protein resides in the secreted. In terms of biological role, the insulin-like growth factors possess growth-promoting activity. Major fetal growth hormone in mammals. Plays a key role in regulating fetoplacental development. IGF2 is influenced by placental lactogen. Also involved in tissue differentiation. In adults, involved in glucose metabolism in adipose tissue, skeletal muscle and liver. Acts as a ligand for integrin which is required for IGF2 signaling. Positively regulates myogenic transcription factor MYOD1 function by facilitating the recruitment of transcriptional coactivators, thereby controlling muscle terminal differentiation. Inhibits myoblast differentiation and modulates metabolism via increasing the mitochondrial respiration rate. Its function is as follows. Preptin undergoes glucose-mediated co-secretion with insulin, and acts as a physiological amplifier of glucose-mediated insulin secretion. Exhibits osteogenic properties by increasing osteoblast mitogenic activity through phosphoactivation of MAPK1 and MAPK3. This is Insulin-like growth factor 2 from Rattus norvegicus (Rat).